We begin with the raw amino-acid sequence, 383 residues long: Transposase InsI for insertion sequence element IS30C (383 aa).

One can recognise an Integrase catalytic domain in the interval 213–379; that stretch reads VNGTPIHERS…TPKEIIERGV (167 aa).

It belongs to the transposase IS30 family.

In terms of biological role, required for the transposition of the insertion element. This chain is Transposase InsI for insertion sequence element IS30C (insI3), found in Escherichia coli (strain K12).